Reading from the N-terminus, the 630-residue chain is MKMAAVGSAKSTGPGQRSKSRPGALSAPLSLEEARCPVCSEILLEPVTMPCGHSVCLHCFQRTVKLISLCCPLCRLRVSSWARKQSREKSLVNAELWELVRLSHPERCKRRMEQRDGEIPDGEIFRAPVPVHKVGEMRQEYEKQKMKSGRSEETDERKKKMHIKEECVLLKHCQYPFCGVSDSENEEPVGRRTRHVSAFVRKTRCSPAFNKSCLHSSAAQRSRSCTDSEDGRGKSRGHTNQAVPEKANIAHSYNAGILLSSENSRSFSAPLLSLDKRHHWRGIHTSSATLVLQTKPERSISPESNDSISEELNHFKPIVCSPCTPPKRLPDGRLLEPMIVKSTPRNLTRALHKSTSYEASPTILQKWKQIEVDRQCIKVTSKGTVTSPIAEDLNLKLSPVEERDCQPCSCSVAKDRLLDLQCICGSNAHKSKSRKDKPIIYNKRRLIFDPYNKGEEKTQVAALIKTFGDSSTPKACKELCEPSEMGPPMLDSNAGHCNQGTVDPDHNIKINEPTTMSCVLNRPTSRRGKKRSQKTKHMEETLQTKISRTNRYDSLDDLIVQRMSQEKEDRELALKLQRQFDRECKKVDRHKTSRNKYELRSWGSKDGIVGYNTRRSGRVSKQNEHFNYTC.

The interval 1–24 (MKMAAVGSAKSTGPGQRSKSRPGA) is disordered. An RING-type zinc finger spans residues 36-75 (CPVCSEILLEPVTMPCGHSVCLHCFQRTVKLISLCCPLCR). A UMI motif motif is present at residues 155-163 (DERKKKMHI). The segment at 220 to 247 (QRSRSCTDSEDGRGKSRGHTNQAVPEKA) is disordered. The segment covering 224 to 233 (SCTDSEDGRG) has biased composition (basic and acidic residues). The MIU motif signature appears at 565 to 582 (QEKEDRELALKLQRQFDR). The LR motif motif lies at 599 to 611 (LRSWGSKDGIVGY).

It belongs to the RNF169 family.

It is found in the nucleus. It localises to the nucleoplasm. The catalysed reaction is S-ubiquitinyl-[E2 ubiquitin-conjugating enzyme]-L-cysteine + [acceptor protein]-L-lysine = [E2 ubiquitin-conjugating enzyme]-L-cysteine + N(6)-ubiquitinyl-[acceptor protein]-L-lysine.. It participates in protein modification; protein ubiquitination. Functionally, probable E3 ubiquitin-protein ligase that acts as a negative regulator of double-strand breaks (DSBs) repair following DNA damage. This chain is E3 ubiquitin-protein ligase RNF169 (rnf169), found in Danio rerio (Zebrafish).